A 175-amino-acid polypeptide reads, in one-letter code: UPF0398 protein SPD_0338 (175 aa).

Belongs to the UPF0398 family.

The protein is UPF0398 protein SPD_0338 of Streptococcus pneumoniae serotype 2 (strain D39 / NCTC 7466).